A 417-amino-acid polypeptide reads, in one-letter code: NADH-quinone oxidoreductase subunit D (417 aa).

This sequence belongs to the complex I 49 kDa subunit family. In terms of assembly, NDH-1 is composed of 14 different subunits. Subunits NuoB, C, D, E, F, and G constitute the peripheral sector of the complex.

It localises to the cell inner membrane. The enzyme catalyses a quinone + NADH + 5 H(+)(in) = a quinol + NAD(+) + 4 H(+)(out). In terms of biological role, NDH-1 shuttles electrons from NADH, via FMN and iron-sulfur (Fe-S) centers, to quinones in the respiratory chain. The immediate electron acceptor for the enzyme in this species is believed to be ubiquinone. Couples the redox reaction to proton translocation (for every two electrons transferred, four hydrogen ions are translocated across the cytoplasmic membrane), and thus conserves the redox energy in a proton gradient. The chain is NADH-quinone oxidoreductase subunit D from Paraburkholderia phymatum (strain DSM 17167 / CIP 108236 / LMG 21445 / STM815) (Burkholderia phymatum).